The sequence spans 1142 residues: Protein lin-25 (1142 aa).

The span at 600–613 (IEEEIEEEEEDIEP) shows a compositional bias: acidic residues. Residues 600–706 (IEEEIEEEEE…EKPKEPLEPT (107 aa)) are disordered. Composition is skewed to basic and acidic residues over residues 614–627 (EVVKEMKESGTEKE), 652–662 (DEQKTEEKMDT), and 679–703 (DPPKVEEPAERINQEKPEEKPKEPL).

It localises to the nucleus. The protein localises to the cytoplasm. Functionally, participates in the inductive signaling pathway downstream of let-60 Ras and the RAF/MAP kinase cascade to regulate specification and differentiation of many cell types. Positively regulates the fate of vulval precursor cells. Required for induction of the P12 and excretory duct cell fates. In males, it is also required for proper formation of spicules. Does not function in the signaling pathway that promotes exit from pachytene. The sequence is that of Protein lin-25 from Caenorhabditis briggsae.